We begin with the raw amino-acid sequence, 717 residues long: ATP-dependent zinc metalloprotease FtsH (717 aa).

Topologically, residues 1 to 7 (MFKDKKM) are cytoplasmic. The helical transmembrane segment at 8–28 (LKYIVIYSIIAFGILLTFNMV) threads the bilayer. The Extracellular segment spans residues 29–109 (KDEMLYEKVD…VEFNVTKPEN (81 aa)). A helical membrane pass occupies residues 110–130 (YQLLGLLMSWVFPLILIFFVG). Residues 131–717 (RMMFSKMNNK…SSTNNKVDGE (587 aa)) are Cytoplasmic-facing. 206-213 (GPPGTGKT) is an ATP binding site. His427 is a binding site for Zn(2+). Glu428 is an active-site residue. 2 residues coordinate Zn(2+): His431 and Asp504. The tract at residues 670–717 (KLARANNEANNDALDSSKENEEVKSNVNDGATEEKKDDSSTNNKVDGE) is disordered. Composition is skewed to basic and acidic residues over residues 684–693 (DSSKENEEVK) and 701–717 (TEEK…VDGE).

It in the central section; belongs to the AAA ATPase family. This sequence in the C-terminal section; belongs to the peptidase M41 family. Homohexamer. Requires Zn(2+) as cofactor.

The protein resides in the cell membrane. Functionally, acts as a processive, ATP-dependent zinc metallopeptidase for both cytoplasmic and membrane proteins. Plays a role in the quality control of integral membrane proteins. The polypeptide is ATP-dependent zinc metalloprotease FtsH (Clostridium perfringens (strain ATCC 13124 / DSM 756 / JCM 1290 / NCIMB 6125 / NCTC 8237 / Type A)).